Here is a 510-residue protein sequence, read N- to C-terminus: Protein ERGIC-53 (510 aa).

The N-terminal stretch at 1 to 30 is a signal peptide; it reads MAGSRRRGLQARVRPLFCALLLSLSRFVGG. The Lumenal segment spans residues 31-477; that stretch reads DGVGGDPAAG…ELPPFPSCLS (447 aa). In terms of domain architecture, L-type lectin-like spans 44 to 267; it reads RRFEYKYSFK…DVLSFLTFQL (224 aa). Residues serine 88 and aspartate 121 each coordinate a carbohydrate. Aspartate 152, phenylalanine 154, and asparagine 156 together coordinate Ca(2+). Residues asparagine 156 and histidine 178 each contribute to the a carbohydrate site. A Ca(2+)-binding site is contributed by aspartate 181. The cysteines at positions 190 and 230 are disulfide-linked. 251–253 is an a carbohydrate binding site; that stretch reads GGL. Position 425 is a phosphoserine (serine 425). A helical membrane pass occupies residues 478–498; that stretch reads TVHFIIFVVVQTVLFIGYIMY. Residues 499-510 lie on the Cytoplasmic side of the membrane; sequence RSQQEAAAKKFF. Residues 499–510 form a mediates interaction with RAB3GAP1, RAB3GAP2 and UBXN6 region; the sequence is RSQQEAAAKKFF. The short motif at 509 to 510 is the ER export motif element; it reads FF.

As to quaternary structure, exists both as a covalent disulfide-linked homohexamer, and a complex of three disulfide-linked dimers non-covalently kept together. Interacts with MCFD2. May interact with TMEM115. Interacts with RAB3GAP1 and RAB3GAP2. Interacts with UBXN6. Interacts with SERPINA1/alpha1-antitrypsin. Interacts with BET1.

The protein localises to the endoplasmic reticulum-Golgi intermediate compartment membrane. The protein resides in the golgi apparatus membrane. Its subcellular location is the endoplasmic reticulum membrane. Mannose-specific lectin. May recognize sugar residues of glycoproteins, glycolipids, or glycosylphosphatidyl inositol anchors and may be involved in the sorting or recycling of proteins, lipids, or both. The LMAN1-MCFD2 complex forms a specific cargo receptor for the ER-to-Golgi transport of selected proteins. The protein is Protein ERGIC-53 (LMAN1) of Chlorocebus aethiops (Green monkey).